The primary structure comprises 291 residues: Homoserine kinase (291 aa).

Residue 80 to 90 (RPASGLGSSAA) coordinates ATP.

It belongs to the GHMP kinase family. Homoserine kinase subfamily.

The protein localises to the cytoplasm. It catalyses the reaction L-homoserine + ATP = O-phospho-L-homoserine + ADP + H(+). Its pathway is amino-acid biosynthesis; L-threonine biosynthesis; L-threonine from L-aspartate: step 4/5. Functionally, catalyzes the ATP-dependent phosphorylation of L-homoserine to L-homoserine phosphate. The chain is Homoserine kinase from Natronomonas pharaonis (strain ATCC 35678 / DSM 2160 / CIP 103997 / JCM 8858 / NBRC 14720 / NCIMB 2260 / Gabara) (Halobacterium pharaonis).